Consider the following 432-residue polypeptide: ATP-dependent RNA helicase RhlB (432 aa).

Positions 9–37 match the Q motif motif; that stretch reads QRFADLPLHAEVIQALNENGFEFCTPIQA. The Helicase ATP-binding domain occupies 40–219; that stretch reads LPVLLKAKDI…YDHMNDPEKV (180 aa). Residue 53 to 60 participates in ATP binding; sequence AQTGTGKT. Positions 165–168 match the DEAD box motif; sequence DEAD. The 148-residue stretch at 243-390 folds into the Helicase C-terminal domain; the sequence is KMRLLLTLME…VSRYDREALL (148 aa). The interval 395–432 is disordered; the sequence is TPVKIHRKHPTSRTRDGAKGAHRSGGARPPRHRTRRPS. Basic residues predominate over residues 423 to 432; sequence PPRHRTRRPS.

Belongs to the DEAD box helicase family. RhlB subfamily. In terms of assembly, component of the RNA degradosome, which is a multiprotein complex involved in RNA processing and mRNA degradation.

It localises to the cytoplasm. It catalyses the reaction ATP + H2O = ADP + phosphate + H(+). In terms of biological role, DEAD-box RNA helicase involved in RNA degradation. Has RNA-dependent ATPase activity and unwinds double-stranded RNA. The chain is ATP-dependent RNA helicase RhlB from Shewanella denitrificans (strain OS217 / ATCC BAA-1090 / DSM 15013).